A 263-amino-acid chain; its full sequence is Endonuclease 8 (263 aa).

Proline 2 acts as the Schiff-base intermediate with DNA in catalysis. Residue glutamate 3 is the Proton donor of the active site. The active-site Proton donor; for beta-elimination activity is lysine 53. The DNA site is built by glutamine 70, arginine 125, and asparagine 169. The FPG-type zinc finger occupies 229–263 (KVFHRDGEPCERCGSIIEKTTLSSRPFYWCPGCQH). Arginine 253 functions as the Proton donor; for delta-elimination activity in the catalytic mechanism.

It belongs to the FPG family. Zn(2+) is required as a cofactor.

The enzyme catalyses 2'-deoxyribonucleotide-(2'-deoxyribose 5'-phosphate)-2'-deoxyribonucleotide-DNA = a 3'-end 2'-deoxyribonucleotide-(2,3-dehydro-2,3-deoxyribose 5'-phosphate)-DNA + a 5'-end 5'-phospho-2'-deoxyribonucleoside-DNA + H(+). In terms of biological role, involved in base excision repair of DNA damaged by oxidation or by mutagenic agents. Acts as a DNA glycosylase that recognizes and removes damaged bases. Has a preference for oxidized pyrimidines, such as thymine glycol, 5,6-dihydrouracil and 5,6-dihydrothymine. Has AP (apurinic/apyrimidinic) lyase activity and introduces nicks in the DNA strand. Cleaves the DNA backbone by beta-delta elimination to generate a single-strand break at the site of the removed base with both 3'- and 5'-phosphates. This Escherichia coli O9:H4 (strain HS) protein is Endonuclease 8.